Consider the following 729-residue polypeptide: MLYKGDTLYLDWLEDGIAELVFDAPGSVNKLDTATVASLGEAIGVLEQQSDLKGLLLRSNKAAFIVGADITEFLSLFLVPEEQLSQWLHFANSVFNRLEDLPVPTIAAVNGYALGGGCECVLATDYRLATPDLRIGLPETKLGIMPGFGGSVRMPRMLGADSALEIIAAGKDVGADQALKIGLVDGVVKAEKLVEGAIAILRQAINGDLDWKAKRQPKLEPLKLSKIEAAMSFTIAKGMVAQTAGKHYPAPITAVKTIEAAARFGREEALNLENKSFVPLAHTNEARALVGIFLNDQYVKGKAKKLTKDVETPKQAAVLGAGIMGGGIAYQSAWKGVPVVMKDINDKSLTLGMTEAAKLLNKQLERGKIDGLKLAGVISTIHPTLDYAGFDRVDVVVEAVVENPKVKKAVLAETEQKVRPDTVLASNTSTIPISELANALERPENFCGMHFFNPVHRMPLVEIIRGEKSSDETIAKVVAWASKMGKTPIVVNDCPGFFVNRVLFPYFAGFSQLLRDGAGFRKIDKVMEKQFGWPMGPAYLLDVVGIDTAHHAQAVMAAGFPQRMQKDYRDAIDALFDANRFGQKNGLGFWRYKEDSKGKPKKEEDVVVDDLLAKVSQPKRDFSEEEIIARMMIPMVNEVVRCLEEGIIATPAEADMALVYGLGFPPFHGGAFRWLDTLGSAKYLDMAQQYQHLGPLYEVPEGLRNKARHNEPYYPPVEPARPVGDLKTA.

The tract at residues 1 to 189 is enoyl-CoA hydratase/isomerase; the sequence is MLYKGDTLYL…KIGLVDGVVK (189 aa). D296 is a substrate binding site. The segment at 311–729 is 3-hydroxyacyl-CoA dehydrogenase; sequence ETPKQAAVLG…ARPVGDLKTA (419 aa). Residues M324, D343, 400 to 402, K407, and S429 each bind NAD(+); that span reads VVE. The active-site For 3-hydroxyacyl-CoA dehydrogenase activity is the H450. An NAD(+)-binding site is contributed by N453. Positions 500 and 660 each coordinate substrate. The interval 708–729 is disordered; sequence RHNEPYYPPVEPARPVGDLKTA.

The protein in the N-terminal section; belongs to the enoyl-CoA hydratase/isomerase family. It in the C-terminal section; belongs to the 3-hydroxyacyl-CoA dehydrogenase family. Heterotetramer of two alpha chains (FadB) and two beta chains (FadA).

The enzyme catalyses a (3S)-3-hydroxyacyl-CoA + NAD(+) = a 3-oxoacyl-CoA + NADH + H(+). The catalysed reaction is a (3S)-3-hydroxyacyl-CoA = a (2E)-enoyl-CoA + H2O. It catalyses the reaction a 4-saturated-(3S)-3-hydroxyacyl-CoA = a (3E)-enoyl-CoA + H2O. It carries out the reaction (3S)-3-hydroxybutanoyl-CoA = (3R)-3-hydroxybutanoyl-CoA. The enzyme catalyses a (3Z)-enoyl-CoA = a 4-saturated (2E)-enoyl-CoA. The catalysed reaction is a (3E)-enoyl-CoA = a 4-saturated (2E)-enoyl-CoA. It functions in the pathway lipid metabolism; fatty acid beta-oxidation. Involved in the aerobic and anaerobic degradation of long-chain fatty acids via beta-oxidation cycle. Catalyzes the formation of 3-oxoacyl-CoA from enoyl-CoA via L-3-hydroxyacyl-CoA. It can also use D-3-hydroxyacyl-CoA and cis-3-enoyl-CoA as substrate. In Escherichia coli O81 (strain ED1a), this protein is Fatty acid oxidation complex subunit alpha.